Consider the following 306-residue polypeptide: Curved DNA-binding protein (306 aa).

Residues D5 to W69 form the J domain.

It is found in the cytoplasm. Its subcellular location is the nucleoid. Functionally, DNA-binding protein that preferentially recognizes a curved DNA sequence. It is probably a functional analog of DnaJ; displays overlapping activities with DnaJ, but functions under different conditions, probably acting as a molecular chaperone in an adaptive response to environmental stresses other than heat shock. Lacks autonomous chaperone activity; binds native substrates and targets them for recognition by DnaK. Its activity is inhibited by the binding of CbpM. The chain is Curved DNA-binding protein from Escherichia coli O8 (strain IAI1).